Reading from the N-terminus, the 245-residue chain is tRNA pseudouridine synthase A (245 aa).

The active-site Nucleophile is aspartate 52. Substrate is bound at residue tyrosine 111.

It belongs to the tRNA pseudouridine synthase TruA family. In terms of assembly, homodimer.

It catalyses the reaction uridine(38/39/40) in tRNA = pseudouridine(38/39/40) in tRNA. Its function is as follows. Formation of pseudouridine at positions 38, 39 and 40 in the anticodon stem and loop of transfer RNAs. The sequence is that of tRNA pseudouridine synthase A from Rhodopseudomonas palustris (strain HaA2).